Here is a 307-residue protein sequence, read N- to C-terminus: MWTGKKVDSARALIARGWGVSLVSRCLRVSRAQLHVILRRTDDWMDGRRSRHTDDTDVLLRIHHVIGELPTYGYRRVWALLRRQAELDGMPAINAKRVYRIMRQNALLLERKPAVPPSKRAHTGRVAVKESNQRWCSDGFEFCCDNGERLRVTFALDCCDREALHWAVTTGGFNSETVQDVMLGAVERRFGNDLPSSPVEWLTDNGSCYRANETRQFARMLGLEPKNTAVRSPESNGIAESFVKTIKRDYISIMPKPDGLTAAKNLAEAFEHYNEWHPHSALGYRSPREYLRQRACNGLSDNRCLEI.

The Integrase catalytic domain maps to 112 to 295 (KPAVPPSKRA…SPREYLRQRA (184 aa)).

Involved in the transposition of the insertion sequence IS2. The sequence is that of Transposase InsD for insertion element IS2-9 from Escherichia coli (strain K12).